Here is a 295-residue protein sequence, read N- to C-terminus: Acetylglutamate kinase (295 aa).

Residues 66-67, Arg88, and Asn193 contribute to the substrate site; that span reads GG.

Belongs to the acetylglutamate kinase family. ArgB subfamily.

The protein localises to the cytoplasm. The enzyme catalyses N-acetyl-L-glutamate + ATP = N-acetyl-L-glutamyl 5-phosphate + ADP. It functions in the pathway amino-acid biosynthesis; L-arginine biosynthesis; N(2)-acetyl-L-ornithine from L-glutamate: step 2/4. Functionally, catalyzes the ATP-dependent phosphorylation of N-acetyl-L-glutamate. The protein is Acetylglutamate kinase of Allorhizobium ampelinum (strain ATCC BAA-846 / DSM 112012 / S4) (Agrobacterium vitis (strain S4)).